The following is a 125-amino-acid chain: Large ribosomal subunit protein bL12 (125 aa).

Belongs to the bacterial ribosomal protein bL12 family. As to quaternary structure, homodimer. Part of the ribosomal stalk of the 50S ribosomal subunit. Forms a multimeric L10(L12)X complex, where L10 forms an elongated spine to which 2 to 4 L12 dimers bind in a sequential fashion. Binds GTP-bound translation factors.

Functionally, forms part of the ribosomal stalk which helps the ribosome interact with GTP-bound translation factors. Is thus essential for accurate translation. This chain is Large ribosomal subunit protein bL12, found in Granulibacter bethesdensis (strain ATCC BAA-1260 / CGDNIH1).